The chain runs to 269 residues: Phosphonoacetaldehyde hydrolase (269 aa).

The Nucleophile role is filled by Asp-10. Mg(2+)-binding residues include Asp-10 and Ala-12. Lys-52 (schiff-base intermediate with substrate) is an active-site residue. Asp-186 is a Mg(2+) binding site.

The protein belongs to the HAD-like hydrolase superfamily. PhnX family. As to quaternary structure, homodimer. The cofactor is Mg(2+).

It carries out the reaction phosphonoacetaldehyde + H2O = acetaldehyde + phosphate + H(+). In terms of biological role, involved in phosphonate degradation. This chain is Phosphonoacetaldehyde hydrolase (phnX), found in Salmonella typhimurium (strain LT2 / SGSC1412 / ATCC 700720).